The primary structure comprises 319 residues: Large ribosomal subunit protein eL8 (319 aa).

K87 bears the N6-acetyllysine mark. Residue K101 forms a Glycyl lysine isopeptide (Lys-Gly) (interchain with G-Cter in SUMO2) linkage. K150 bears the N6-acetyllysine; alternate mark. A Glycyl lysine isopeptide (Lys-Gly) (interchain with G-Cter in SUMO2); alternate cross-link involves residue K150. K178 participates in a covalent cross-link: Glycyl lysine isopeptide (Lys-Gly) (interchain with G-Cter in SUMO2). N6-acetyllysine is present on K270. K298 participates in a covalent cross-link: Glycyl lysine isopeptide (Lys-Gly) (interchain with G-Cter in SUMO2).

Belongs to the eukaryotic ribosomal protein eL8 family. As to quaternary structure, component of the large ribosomal subunit. Interacts with CRY1. Interacts with DICER1, AGO2, TARBP2, MOV10 and EIF6; they form a large RNA-induced silencing complex (RISC).

The protein localises to the cytoplasm. Its function is as follows. Component of the large ribosomal subunit. The ribosome is a large ribonucleoprotein complex responsible for the synthesis of proteins in the cell. This chain is Large ribosomal subunit protein eL8 (RPL7A), found in Oryctolagus cuniculus (Rabbit).